Here is a 141-residue protein sequence, read N- to C-terminus: Galactose-6-phosphate isomerase subunit LacA (141 aa).

The protein belongs to the LacAB/RpiB family. As to quaternary structure, heteromultimeric protein consisting of LacA and LacB.

The enzyme catalyses aldehydo-D-galactose 6-phosphate = keto-D-tagatose 6-phosphate. It functions in the pathway carbohydrate metabolism; D-galactose 6-phosphate degradation; D-tagatose 6-phosphate from D-galactose 6-phosphate: step 1/1. This chain is Galactose-6-phosphate isomerase subunit LacA, found in Streptococcus agalactiae serotype Ia (strain ATCC 27591 / A909 / CDC SS700).